The sequence spans 186 residues: Protein FAM219A (186 aa).

Disordered stretches follow at residues 1-47 and 59-132; these read MMEE…NYKP and ELAR…GYSS. The segment covering 67-81 has biased composition (polar residues); sequence KNGTVGSPVNQQPKK. Residues 123-132 are compositionally biased toward low complexity; that stretch reads SRYSSSGYSS.

Belongs to the FAM219 family.

The sequence is that of Protein FAM219A (fam219a) from Danio rerio (Zebrafish).